Consider the following 415-residue polypeptide: Putative serpin-Z6C (415 aa).

The interval glycine 357–alanine 381 is RCL.

It belongs to the serpin family.

In terms of biological role, probable serine protease inhibitor. This chain is Putative serpin-Z6C, found in Oryza sativa subsp. japonica (Rice).